Consider the following 341-residue polypeptide: Putative [LysW]-lysine/[LysW]-ornithine hydrolase (341 aa).

Position 62 (His62) interacts with Zn(2+). Asp64 is an active-site residue. Asp86 contacts Zn(2+). The active-site Proton acceptor is the Glu115. Zn(2+) contacts are provided by Glu116, Glu140, and His309.

The protein belongs to the peptidase M20A family. LysK subfamily. Zn(2+) serves as cofactor. Co(2+) is required as a cofactor.

The protein localises to the cytoplasm. It carries out the reaction [amino-group carrier protein]-C-terminal-gamma-(L-lysyl)-L-glutamate + H2O = [amino-group carrier protein]-C-terminal-L-glutamate + L-lysine. The catalysed reaction is [amino-group carrier protein]-C-terminal-gamma-(L-ornithyl)-L-glutamate + H2O = [amino-group carrier protein]-C-terminal-L-glutamate + L-ornithine. Its pathway is amino-acid biosynthesis; L-lysine biosynthesis via AAA pathway; L-lysine from L-alpha-aminoadipate (Thermus route): step 5/5. The protein operates within amino-acid biosynthesis; L-arginine biosynthesis. Functionally, catalyzes the release of L-lysine from [LysW]-gamma-L-lysine and the release of L-ornithine from [LysW]-L-ornithine. This Pyrobaculum aerophilum (strain ATCC 51768 / DSM 7523 / JCM 9630 / CIP 104966 / NBRC 100827 / IM2) protein is Putative [LysW]-lysine/[LysW]-ornithine hydrolase.